The chain runs to 110 residues: Non-specific lipid-transfer protein 4 (110 aa).

The N-terminal stretch at 1 to 17 is a signal peptide; sequence CVVLVMCMVVIAPMAEG. 4 cysteine pairs are disulfide-bonded: Cys21–Cys68, Cys31–Cys45, Cys46–Cys91, and Cys66–Cys105.

It belongs to the plant LTP family.

Plant non-specific lipid-transfer proteins transfer phospholipids as well as galactolipids across membranes. May play a role in wax or cutin deposition in the cell walls of expanding epidermal cells and certain secretory tissues. The polypeptide is Non-specific lipid-transfer protein 4 (Lens culinaris (Lentil)).